The sequence spans 684 residues: Endo-1,4-beta-xylanase A (684 aa).

The first 34 residues, 1–34 (MMRSLKSRKLVFILAMLFLINAIVSLKFITYSSA), serve as a signal peptide directing secretion. CBM-cenC domains follow at residues 40–190 (KSKY…IKDL) and 193–342 (AYVL…ISDE). Positions 350 to 678 (DYNLPSLCEK…KFAFWSLIDP (329 aa)) constitute a GH10 domain. Glutamate 490 functions as the Proton donor in the catalytic mechanism. The Nucleophile role is filled by glutamate 598.

The protein belongs to the glycosyl hydrolase 10 (cellulase F) family.

It catalyses the reaction Endohydrolysis of (1-&gt;4)-beta-D-xylosidic linkages in xylans.. It participates in glycan degradation; xylan degradation. In Caldicellulosiruptor sp. (strain Rt8B.4), this protein is Endo-1,4-beta-xylanase A (xynA).